We begin with the raw amino-acid sequence, 258 residues long: Exosome complex component Rrp41 (258 aa).

It belongs to the RNase PH family. Rrp41 subfamily. Component of the archaeal exosome complex. Forms a hexameric ring-like arrangement composed of 3 Rrp41-Rrp42 heterodimers. The hexameric ring associates with a trimer of Rrp4 and/or Csl4 subunits.

The protein localises to the cytoplasm. Its function is as follows. Catalytic component of the exosome, which is a complex involved in RNA degradation. Has 3'-&gt;5' exoribonuclease activity. Can also synthesize heteromeric RNA-tails. This Archaeoglobus fulgidus (strain ATCC 49558 / DSM 4304 / JCM 9628 / NBRC 100126 / VC-16) protein is Exosome complex component Rrp41.